The following is a 358-amino-acid chain: Protein RecA (358 aa).

Residue 67 to 74 (GPESSGKT) participates in ATP binding.

This sequence belongs to the RecA family.

It localises to the cytoplasm. Can catalyze the hydrolysis of ATP in the presence of single-stranded DNA, the ATP-dependent uptake of single-stranded DNA by duplex DNA, and the ATP-dependent hybridization of homologous single-stranded DNAs. It interacts with LexA causing its activation and leading to its autocatalytic cleavage. This Xenorhabdus nematophila (strain ATCC 19061 / DSM 3370 / CCUG 14189 / LMG 1036 / NCIMB 9965 / AN6) protein is Protein RecA.